We begin with the raw amino-acid sequence, 426 residues long: Protein FAM181B (426 aa).

Disordered stretches follow at residues 106–157 and 226–246; these read GLMG…AAAA and NLPP…CGPS. Residues 128 to 141 are compositionally biased toward low complexity; it reads PLAAPSAPTVAAPA.

This sequence belongs to the FAM181 family.

The protein is Protein FAM181B (FAM181B) of Homo sapiens (Human).